The sequence spans 1376 residues: DNA-directed RNA polymerase subunit beta (1376 aa).

The protein belongs to the RNA polymerase beta chain family. The RNAP catalytic core consists of 2 alpha, 1 beta, 1 beta' and 1 omega subunit. When a sigma factor is associated with the core the holoenzyme is formed, which can initiate transcription.

It catalyses the reaction RNA(n) + a ribonucleoside 5'-triphosphate = RNA(n+1) + diphosphate. Functionally, DNA-dependent RNA polymerase catalyzes the transcription of DNA into RNA using the four ribonucleoside triphosphates as substrates. The sequence is that of DNA-directed RNA polymerase subunit beta from Methylorubrum extorquens (strain PA1) (Methylobacterium extorquens).